The sequence spans 122 residues: Prefoldin subunit 1 (122 aa).

Belongs to the prefoldin subunit beta family. As to quaternary structure, heterohexamer of two PFD-alpha type and four PFD-beta type subunits.

Binds specifically to cytosolic chaperonin (c-CPN) and transfers target proteins to it. Binds to nascent polypeptide chain and promotes folding in an environment in which there are many competing pathways for nonnative proteins. The protein is Prefoldin subunit 1 (pfdn1) of Tetraodon nigroviridis (Spotted green pufferfish).